Here is a 207-residue protein sequence, read N- to C-terminus: Phosphoenolpyruvate guanylyltransferase (207 aa).

Phosphoenolpyruvate-binding residues include T137, G153, and S156.

The protein belongs to the CofC family.

The catalysed reaction is phosphoenolpyruvate + GTP + H(+) = enolpyruvoyl-2-diphospho-5'-guanosine + diphosphate. It functions in the pathway cofactor biosynthesis; coenzyme F420 biosynthesis. Functionally, guanylyltransferase that catalyzes the activation of phosphoenolpyruvate (PEP) as enolpyruvoyl-2-diphospho-5'-guanosine, via the condensation of PEP with GTP. It is involved in the biosynthesis of coenzyme F420, a hydride carrier cofactor. This is Phosphoenolpyruvate guanylyltransferase from Sphaerobacter thermophilus (strain ATCC 49802 / DSM 20745 / KCCM 41009 / NCIMB 13125 / S 6022).